The chain runs to 206 residues: 2,3-bisphosphoglycerate-dependent phosphoglycerate mutase (206 aa).

Substrate is bound by residues 9–16, 22–23, Arg-61, 88–91, Lys-99, 115–116, and 159–160; these read RHGQSEWN, TG, ERDY, RR, and GN. Catalysis depends on His-10, which acts as the Tele-phosphohistidine intermediate. Glu-88 (proton donor/acceptor) is an active-site residue.

It belongs to the phosphoglycerate mutase family. BPG-dependent PGAM subfamily. Homodimer.

It carries out the reaction (2R)-2-phosphoglycerate = (2R)-3-phosphoglycerate. It functions in the pathway carbohydrate degradation; glycolysis; pyruvate from D-glyceraldehyde 3-phosphate: step 3/5. Catalyzes the interconversion of 2-phosphoglycerate and 3-phosphoglycerate. In Brucella ovis (strain ATCC 25840 / 63/290 / NCTC 10512), this protein is 2,3-bisphosphoglycerate-dependent phosphoglycerate mutase.